A 352-amino-acid chain; its full sequence is MVFRIASSPYTHNQRQTSRIMLLVLLAAVPGIAAQLWFFGWGTLVQILLASVSALLAEALVLKLRKQSVAATLKDNSALLTGLLLAVSIPPLAPWWMVVLGTVFAVIIAKQLYGGLGQNPFNPAMIGYVVLLISFPVQMTSWLPPHEIAVNIPGFIDAIQVIFSGHTASGGDMNTLRLGIDGISQATPLDTFKTSVRAGHSVEQIMQYPIYSGILAGVGWQWVNLAWLAGGVWLLWQKAIRWHIPLSFLVTLALCATLGWLFSPETLAAPQIHLLSGATMLGAFFILTDPVTASTTNRGRLIFGALAGLLVWMIRSFGGYPDGVAFAVLLANITVPLIDYYTRPRVYGHRKG.

The next 5 helical transmembrane spans lie at 20 to 40 (IMLLVLLAAVPGIAAQLWFFG), 42 to 62 (GTLVQILLASVSALLAEALVL), 78 to 109 (ALLTGLLLAVSIPPLAPWWMVVLGTVFAVIIA), 123 to 143 (PAMIGYVVLLISFPVQMTSWL), and 148 to 168 (IAVNIPGFIDAIQVIFSGHTA). The residue at position 187 (Thr187) is an FMN phosphoryl threonine. 5 consecutive transmembrane segments (helical) span residues 214–234 (ILAGVGWQWVNLAWLAGGVWL), 242–262 (WHIPLSFLVTLALCATLGWLF), 267–287 (LAAPQIHLLSGATMLGAFFIL), 301–321 (LIFGALAGLLVWMIRSFGGYP), and 322–342 (DGVAFAVLLANITVPLIDYYT).

Belongs to the NqrB/RnfD family. As to quaternary structure, the complex is composed of six subunits: RsxA, RsxB, RsxC, RsxD, RsxE and RsxG. The cofactor is FMN.

It is found in the cell inner membrane. Functionally, part of a membrane-bound complex that couples electron transfer with translocation of ions across the membrane. Required to maintain the reduced state of SoxR. This is Ion-translocating oxidoreductase complex subunit D from Escherichia coli O6:H1 (strain CFT073 / ATCC 700928 / UPEC).